A 352-amino-acid polypeptide reads, in one-letter code: DNA polymerase IV (352 aa).

One can recognise a UmuC domain in the interval 6-186; that stretch reads IIHIDMDAFY…LPLGKIPGVG (181 aa). Mg(2+) contacts are provided by Asp10 and Asp104. Glu105 is a catalytic residue.

This sequence belongs to the DNA polymerase type-Y family. As to quaternary structure, monomer. The cofactor is Mg(2+).

Its subcellular location is the cytoplasm. It catalyses the reaction DNA(n) + a 2'-deoxyribonucleoside 5'-triphosphate = DNA(n+1) + diphosphate. In terms of biological role, poorly processive, error-prone DNA polymerase involved in untargeted mutagenesis. Copies undamaged DNA at stalled replication forks, which arise in vivo from mismatched or misaligned primer ends. These misaligned primers can be extended by PolIV. Exhibits no 3'-5' exonuclease (proofreading) activity. May be involved in translesional synthesis, in conjunction with the beta clamp from PolIII. The protein is DNA polymerase IV of Neisseria meningitidis serogroup C / serotype 2a (strain ATCC 700532 / DSM 15464 / FAM18).